The following is a 317-amino-acid chain: Anamorsin homolog (317 aa).

Positions 1–192 are N-terminal SAM-like domain; it reads MREVLVVSES…ITGVRPNWKA (192 aa). Residues 193–216 are linker; it reads KGDRKSSSIHAAPIDGYISKAPDY. [2Fe-2S] cluster-binding residues include Cys219, Cys226, Cys229, and Cys231. The interval 219–231 is fe-S binding site A; the sequence is CSTKPRACANCTC. Cys286, Cys289, Cys297, and Cys300 together coordinate [4Fe-4S] cluster. Short sequence motifs (cx2C motif) lie at residues 286-289 and 297-300; these read CGNC and CDSC. Positions 286–300 are fe-S binding site B; sequence CGNCYLGDAFRCDSC.

Belongs to the anamorsin family. As to quaternary structure, monomer. It depends on [2Fe-2S] cluster as a cofactor. Requires [4Fe-4S] cluster as cofactor.

It is found in the cytoplasm. The protein resides in the mitochondrion intermembrane space. Functionally, component of the cytosolic iron-sulfur (Fe-S) protein assembly (CIA) machinery. Required for the maturation of extramitochondrial Fe-S proteins. Part of an electron transfer chain functioning in an early step of cytosolic Fe-S biogenesis, facilitating the de novo assembly of a [4Fe-4S] cluster on the cytosolic Fe-S scaffold complex. Electrons are transferred from NADPH via a FAD- and FMN-containing diflavin oxidoreductase. Together with the diflavin oxidoreductase, also required for the assembly of the diferric tyrosyl radical cofactor of ribonucleotide reductase (RNR), probably by providing electrons for reduction during radical cofactor maturation in the catalytic small subunit. The chain is Anamorsin homolog from Theileria parva (East coast fever infection agent).